Reading from the N-terminus, the 65-residue chain is Large ribosomal subunit protein uL29 (65 aa).

This sequence belongs to the universal ribosomal protein uL29 family.

The protein is Large ribosomal subunit protein uL29 of Syntrophus aciditrophicus (strain SB).